Reading from the N-terminus, the 429-residue chain is Ribosomal RNA small subunit methyltransferase B (429 aa).

S-adenosyl-L-methionine-binding positions include 254 to 260 (CAAPGGK), aspartate 277, aspartate 303, and aspartate 322. Cysteine 375 (nucleophile) is an active-site residue.

Belongs to the class I-like SAM-binding methyltransferase superfamily. RsmB/NOP family.

The protein localises to the cytoplasm. It carries out the reaction cytidine(967) in 16S rRNA + S-adenosyl-L-methionine = 5-methylcytidine(967) in 16S rRNA + S-adenosyl-L-homocysteine + H(+). Its function is as follows. Specifically methylates the cytosine at position 967 (m5C967) of 16S rRNA. The protein is Ribosomal RNA small subunit methyltransferase B of Photorhabdus laumondii subsp. laumondii (strain DSM 15139 / CIP 105565 / TT01) (Photorhabdus luminescens subsp. laumondii).